Reading from the N-terminus, the 435-residue chain is ATP-dependent RNA helicase RhlB (435 aa).

Positions 9-37 match the Q motif motif; that stretch reads QKFADFSLQTEIKTALNESGFEYCTPIQA. Residues 40–219 form the Helicase ATP-binding domain; the sequence is LPILLQKKDI…YDHMNEPEKV (180 aa). Position 53 to 60 (53 to 60) interacts with ATP; the sequence is AQTGTGKT. A DEAD box motif is present at residues 165–168; sequence DEAD. One can recognise a Helicase C-terminal domain in the interval 243 to 390; it reads KMRLLLTLLE…VTNYDSEALL (148 aa). A disordered region spans residues 395 to 435; the sequence is APVRVHRKHNSRPQGRSGSGGKPRSGNRNAPRRHDKTRRHS. Residues 424 to 435 are compositionally biased toward basic residues; that stretch reads APRRHDKTRRHS.

The protein belongs to the DEAD box helicase family. RhlB subfamily. Component of the RNA degradosome, which is a multiprotein complex involved in RNA processing and mRNA degradation.

Its subcellular location is the cytoplasm. It carries out the reaction ATP + H2O = ADP + phosphate + H(+). Its function is as follows. DEAD-box RNA helicase involved in RNA degradation. Has RNA-dependent ATPase activity and unwinds double-stranded RNA. The chain is ATP-dependent RNA helicase RhlB from Shewanella sediminis (strain HAW-EB3).